Reading from the N-terminus, the 299-residue chain is Probable xyloglucan endotransglucosylase/hydrolase protein 10 (299 aa).

An N-terminal signal peptide occupies residues 1–29 (MTLINRSKPFVLLVGFSIISSLLLWVSQA). The 196-residue stretch at 30 to 225 (SVVSSGDFNK…WSKGPFVASF (196 aa)) folds into the GH16 domain. Asn-51 carries an N-linked (GlcNAc...) asparagine glycan. Glu-111 (nucleophile) is an active-site residue. Residue Glu-115 is the Proton donor of the active site. Xyloglucan-binding positions include Glu-115, 128–130 (QTN), 138–140 (NRE), 204–205 (SW), and Gly-209. 2 cysteine pairs are disulfide-bonded: Cys-233-Cys-242 and Cys-280-Cys-294. A glycan (N-linked (GlcNAc...) asparagine) is linked at Asn-238. Arg-285 contributes to the xyloglucan binding site.

It belongs to the glycosyl hydrolase 16 family. XTH group 1 subfamily. Post-translationally, contains at least one intrachain disulfide bond essential for its enzymatic activity.

It localises to the secreted. The protein localises to the cell wall. The protein resides in the extracellular space. It is found in the apoplast. The enzyme catalyses breaks a beta-(1-&gt;4) bond in the backbone of a xyloglucan and transfers the xyloglucanyl segment on to O-4 of the non-reducing terminal glucose residue of an acceptor, which can be a xyloglucan or an oligosaccharide of xyloglucan.. Functionally, catalyzes xyloglucan endohydrolysis (XEH) and/or endotransglycosylation (XET). Cleaves and religates xyloglucan polymers, an essential constituent of the primary cell wall, and thereby participates in cell wall construction of growing tissues. The protein is Probable xyloglucan endotransglucosylase/hydrolase protein 10 (XTH10) of Arabidopsis thaliana (Mouse-ear cress).